The sequence spans 255 residues: Tabinhibitin 2 (255 aa).

A signal peptide spans 1 to 23 (MISILVSRFLLAALVLQYATIDA). The Cell attachment site motif lies at 32-34 (RGD). Residues 67–211 (LSKINDVRDH…KARALLTCNF (145 aa)) enclose the SCP domain.

This sequence belongs to the CRISP family. Expressed in salivary glands.

The protein localises to the secreted. Functionally, inhibits platelet aggregation induced by all agonists tested (ADP, arachidonic acid, the thromboxane A2 analog U46619, thrombin, and snake venom snaclecs (TMVA that activates platelet through GPIB, and stejnulxin that specifically acts through GPVI (GP6))). May act by competing with fibrinogen for binding to glycoprotein IIb/IIIa (ITGA2B/ITGB3). The sequence is that of Tabinhibitin 2 from Tabanus yao (Horsefly).